A 434-amino-acid chain; its full sequence is Glutamate-1-semialdehyde 2,1-aminomutase (434 aa).

Lys274 carries the post-translational modification N6-(pyridoxal phosphate)lysine.

Belongs to the class-III pyridoxal-phosphate-dependent aminotransferase family. HemL subfamily. As to quaternary structure, homodimer. Pyridoxal 5'-phosphate is required as a cofactor.

Its subcellular location is the cytoplasm. It catalyses the reaction (S)-4-amino-5-oxopentanoate = 5-aminolevulinate. It participates in porphyrin-containing compound metabolism; protoporphyrin-IX biosynthesis; 5-aminolevulinate from L-glutamyl-tRNA(Glu): step 2/2. This Acidovorax sp. (strain JS42) protein is Glutamate-1-semialdehyde 2,1-aminomutase.